Reading from the N-terminus, the 234-residue chain is Probable chemoreceptor glutamine deamidase CheD 1 (234 aa).

Residues 183–234 (AREAAGPRGERAARARPRVELFGTPAPKAQATPRIELFGTRATQPATRKQEA) form a disordered region. Basic and acidic residues predominate over residues 190–201 (RGERAARARPRV). Positions 223 to 234 (RATQPATRKQEA) are enriched in polar residues.

It belongs to the CheD family.

It carries out the reaction L-glutaminyl-[protein] + H2O = L-glutamyl-[protein] + NH4(+). Functionally, probably deamidates glutamine residues to glutamate on methyl-accepting chemotaxis receptors (MCPs), playing an important role in chemotaxis. This Burkholderia thailandensis (strain ATCC 700388 / DSM 13276 / CCUG 48851 / CIP 106301 / E264) protein is Probable chemoreceptor glutamine deamidase CheD 1.